The primary structure comprises 68 residues: MARWNVCSYCGREFEPGTGKMFVRNDGRVLFFCSSKCEKLYFMGRNPRKLKWTKAFQEARLQRAKRRK.

Zn(2+)-binding residues include C7, C10, C33, and C37. A C4-type zinc finger spans residues C7–C37.

The protein belongs to the eukaryotic ribosomal protein eL24 family. As to quaternary structure, part of the 50S ribosomal subunit. Forms a cluster with proteins L3 and L14. Requires Zn(2+) as cofactor.

Functionally, binds to the 23S rRNA. The protein is Large ribosomal subunit protein eL24 of Thermococcus gammatolerans (strain DSM 15229 / JCM 11827 / EJ3).